A 276-amino-acid polypeptide reads, in one-letter code: Tryptophan synthase alpha chain (276 aa).

Residues E55 and D66 each act as proton acceptor in the active site.

This sequence belongs to the TrpA family. In terms of assembly, tetramer of two alpha and two beta chains.

It carries out the reaction (1S,2R)-1-C-(indol-3-yl)glycerol 3-phosphate + L-serine = D-glyceraldehyde 3-phosphate + L-tryptophan + H2O. The protein operates within amino-acid biosynthesis; L-tryptophan biosynthesis; L-tryptophan from chorismate: step 5/5. Its function is as follows. The alpha subunit is responsible for the aldol cleavage of indoleglycerol phosphate to indole and glyceraldehyde 3-phosphate. This Gloeobacter violaceus (strain ATCC 29082 / PCC 7421) protein is Tryptophan synthase alpha chain.